Here is an 885-residue protein sequence, read N- to C-terminus: Alpha-actinin (885 aa).

The interval 1–242 (MTQDGYMQQE…IMTYVSWYYH (242 aa)) is actin-binding. Calponin-homology (CH) domains lie at 26-130 (KQQR…LRFA) and 139-245 (MTAK…HAFH). 4 Spectrin repeats span residues 270–377 (LMEE…EEWL), 389–494 (HLAQ…ALDE), 508–614 (EFAK…HTLQ), and 626–727 (LRRQ…NEVE). 2 consecutive EF-hand domains span residues 741–776 (EQLN…LGYN) and 780–815 (DDRP…EYTD). Residues aspartate 754, threonine 758, arginine 760, glutamate 765, aspartate 793, asparagine 795, threonine 797, and tyrosine 799 each contribute to the Ca(2+) site.

It belongs to the alpha-actinin family. In terms of assembly, homodimer; antiparallel.

In terms of biological role, F-actin cross-linking protein which is thought to anchor actin to a variety of intracellular structures. This is a bundling protein. In Dermatophagoides farinae (American house dust mite), this protein is Alpha-actinin.